Reading from the N-terminus, the 468-residue chain is Uronate isomerase (468 aa).

It belongs to the metallo-dependent hydrolases superfamily. Uronate isomerase family.

It carries out the reaction D-glucuronate = D-fructuronate. It catalyses the reaction aldehydo-D-galacturonate = keto-D-tagaturonate. The protein operates within carbohydrate metabolism; pentose and glucuronate interconversion. The polypeptide is Uronate isomerase (Phocaeicola vulgatus (strain ATCC 8482 / DSM 1447 / JCM 5826 / CCUG 4940 / NBRC 14291 / NCTC 11154) (Bacteroides vulgatus)).